The chain runs to 416 residues: Exodeoxyribonuclease 7 large subunit (416 aa).

It belongs to the XseA family. In terms of assembly, heterooligomer composed of large and small subunits.

The protein resides in the cytoplasm. It catalyses the reaction Exonucleolytic cleavage in either 5'- to 3'- or 3'- to 5'-direction to yield nucleoside 5'-phosphates.. Its function is as follows. Bidirectionally degrades single-stranded DNA into large acid-insoluble oligonucleotides, which are then degraded further into small acid-soluble oligonucleotides. The protein is Exodeoxyribonuclease 7 large subunit of Acidothermus cellulolyticus (strain ATCC 43068 / DSM 8971 / 11B).